Reading from the N-terminus, the 91-residue chain is Essential MCU regulator, mitochondrial (91 aa).

The helical transmembrane segment at 45–65 (VIPFGLLGVVLTVIPGLLIGA) threads the bilayer.

This sequence belongs to the SMDT1/EMRE family.

It localises to the mitochondrion inner membrane. Its function is as follows. Essential regulatory subunit of the mitochondrial calcium uniporter (mcu) channel, a protein that mediates calcium uptake into mitochondria. This is Essential MCU regulator, mitochondrial from Aedes aegypti (Yellowfever mosquito).